The sequence spans 633 residues: Kelch-like protein diablo (633 aa).

Residues 1–62 (MGDLPGSTGG…ARLSHTSEKH (62 aa)) are disordered. Residues 7-25 (STGGGGGVGGGGNGGGGPT) show a composition bias toward gly residues. Low complexity predominate over residues 26–45 (IAGTNGNSTTGPGSSTGSTG). The BTB domain occupies 80–147 (CDVVLNVGGR…CYTAHIIVEE (68 aa)). The BACK domain maps to 182–284 (CLGIRAFADT…SPKFLVGTVG (103 aa)). Kelch repeat units lie at residues 331–377 (VLFA…VLND), 379–425 (LYAV…VLDG), 426–472 (FLYA…VLGG), 474–519 (LYAI…VFNN), 521–566 (IYAV…VVNG), and 567–613 (QLYA…VMRA).

It functions in the pathway protein modification; protein ubiquitination. Its function is as follows. Probable substrate-specific adapter of an E3 ubiquitin-protein ligase complex which mediates the ubiquitination and subsequent proteasomal degradation of target proteins. May have a role in synapse differentiation and growth. The chain is Kelch-like protein diablo from Drosophila ananassae (Fruit fly).